The following is a 293-amino-acid chain: Acetylglutamate kinase (293 aa).

Residues 65–66 (GG), arginine 87, and asparagine 180 contribute to the substrate site.

The protein belongs to the acetylglutamate kinase family. ArgB subfamily.

It localises to the cytoplasm. It carries out the reaction N-acetyl-L-glutamate + ATP = N-acetyl-L-glutamyl 5-phosphate + ADP. The protein operates within amino-acid biosynthesis; L-arginine biosynthesis; N(2)-acetyl-L-ornithine from L-glutamate: step 2/4. Its function is as follows. Catalyzes the ATP-dependent phosphorylation of N-acetyl-L-glutamate. In Cereibacter sphaeroides (strain ATCC 17029 / ATH 2.4.9) (Rhodobacter sphaeroides), this protein is Acetylglutamate kinase.